Here is a 228-residue protein sequence, read N- to C-terminus: Translation initiation factor 6 (228 aa).

Binds to the 50S ribosomal subunit and prevents its association with the 30S ribosomal subunit to form the 70S initiation complex. In Methanocaldococcus jannaschii (strain ATCC 43067 / DSM 2661 / JAL-1 / JCM 10045 / NBRC 100440) (Methanococcus jannaschii), this protein is Translation initiation factor 6.